The chain runs to 833 residues: Bifunctional dethiobiotin synthetase/7,8-diamino-pelargonic acid aminotransferase, mitochondrial (833 aa).

A mitochondrion-targeting transit peptide spans 1–23 (MIPVTATLIRHRLRHLRHRIRFK). Residues 36–299 (HPTYLIWSAN…VLVLPPVPKD (264 aa)) are dethiobiotin synthetase. 47-52 (SLGKTL) contributes to the ATP binding site. Residue Thr51 participates in Mg(2+) binding. Thr81 contributes to the substrate binding site. Position 88 (Asp88) interacts with Mg(2+). ATP is bound by residues Asp97, 210 to 213 (ETAG), and 270 to 271 (ED). Mg(2+) is bound at residue Glu210. The segment at 332-830 (RLNGMAKLAG…TKLYKRLGEF (499 aa)) is 7,8-diamino-pelargonic acid aminotransferase. 391-392 (WW) lines the (8S)-8-amino-7-oxononanoate pocket. 453 to 454 (GS) is a binding site for pyridoxal 5'-phosphate. Residue Tyr495 participates in (8S)-8-amino-7-oxononanoate binding. ATP-binding positions include 518 to 520 (PWY) and Glu545. Asp637 contacts pyridoxal 5'-phosphate. Lys666 and Gly700 together coordinate (8S)-8-amino-7-oxononanoate. Lys666 carries the N6-(pyridoxal phosphate)lysine modification. Residue 701–702 (HS) participates in pyridoxal 5'-phosphate binding. Arg797 lines the (8S)-8-amino-7-oxononanoate pocket.

It in the N-terminal section; belongs to the dethiobiotin synthetase family. In the C-terminal section; belongs to the class-III pyridoxal-phosphate-dependent aminotransferase family. BioA subfamily. As to quaternary structure, homodimer. It depends on Mg(2+) as a cofactor. Pyridoxal 5'-phosphate serves as cofactor.

The protein localises to the mitochondrion matrix. The catalysed reaction is (7R,8S)-7,8-diammoniononanoate + CO2 + ATP = (4R,5S)-dethiobiotin + ADP + phosphate + 3 H(+). It catalyses the reaction (8S)-8-amino-7-oxononanoate + S-adenosyl-L-methionine = S-adenosyl-4-methylsulfanyl-2-oxobutanoate + (7R,8S)-7,8-diammoniononanoate. Its pathway is cofactor biosynthesis; biotin biosynthesis; biotin from 7,8-diaminononanoate: step 1/2. It functions in the pathway cofactor biosynthesis; biotin biosynthesis; 7,8-diaminononanoate from 8-amino-7-oxononanoate (SAM route): step 1/1. Bifunctional enzyme that catalyzes two different reactions involved in the biotin biosynthesis. In terms of biological role, catalyzes a mechanistically unusual reaction, the ATP-dependent insertion of CO2 between the N7 and N8 nitrogen atoms of 7,8-diaminopelargonic acid (DAPA) to form an ureido ring. Its function is as follows. Catalyzes the transfer of the alpha-amino group from S-adenosyl-L-methionine (SAM) to 7-keto-8-aminopelargonic acid (KAPA) to form 7,8-diaminopelargonic acid (DAPA). It is the only aminotransferase known to utilize SAM as an amino donor. This is Bifunctional dethiobiotin synthetase/7,8-diamino-pelargonic acid aminotransferase, mitochondrial from Arabidopsis thaliana (Mouse-ear cress).